The primary structure comprises 113 residues: Hydrogenase maturation factor HybF (113 aa).

2 residues coordinate Ni(2+): H2 and E3. Zn(2+)-binding residues include C73, C76, C89, and C92.

It belongs to the HypA/HybF family. HybF subfamily.

Functionally, involved in the maturation of [NiFe] hydrogenases. Required for nickel insertion into the metal center of the hydrogenase. The chain is Hydrogenase maturation factor HybF from Klebsiella pneumoniae.